The chain runs to 855 residues: MNDQAPVAYAPLWRTAWRRLRQRPFQYILLVLGIALGVAMIVAIDVSSNSAQRAFDLSAAAITGKSTHRLVSGPAGVDQQLYVDLRRHGYDFSAPVIEGYVLARGLGNRAMQFMGTDPFAESAFRSPLWSNQNIAELGGFLTRPNGVVLSRQVAQKYGLAVGDRIALQVKGAPTTVTLVGLLTPADEVSNQKLSDLIIADISTAQELFHMPGRLSHIDLIIKDEATATRIQQRLPAGVRMETSDTQRDTVKQMTDAFTVNLTALSLIALLVGIFLIYNTVTFNVVQRRPFFAILRCLGVTREQLFWLIMTESLVAGLIGTGLGLLIGIWLGEGLIGLVTQTINDFYFVINVRNVSVSAESLLKGLIIGIFAAMLATLPPAIEAMRTVPASTLRRSSLESKITKLMPWLWVAWFGLGSFGVLMLWLPGNNLVVAFVGLFSVLIALALIAPPLTRFVMLRLAPGLGRLLGPIGRMAPRNIVRSLSRTSIAIAALMMAVSLMVGVSISVGSFRQTLANWLEVTLKSDVYVSPPTLTSGRPSGNLPVDAVRNISKWPGVRDAVMARYSSVFAPDWGREVELMAVSGDISDGKRPYRWIDGNKDTLWPRFLAGKGVMLSEPMVSRQHLQMPPRPITLMTDSGPQTFPVLAVFSDYTSDQGVILMDRASYRAHWQDDDVTTMFLFLASGANSGALIDQLQAAFAGREDIVIQSTHSVREASMFIFDRSFTITIALQLVATVVAFIGVLSALMSLELDRAHELGVFRAIGMTTRQLWKLMFIETGLMGGMAGLMALPTGCILAWILVRIINVRSFGWTLQMHFESAHFLRALLVAVVAALAAGMYPAWRLGRMTIRTAIREE.

10 helical membrane-spanning segments follow: residues 24–44 (PFQY…IVAI), 256–276 (AFTV…IFLI), 318–338 (IGTG…IGLV), 361–381 (LLKG…PPAI), 404–424 (LMPW…LMLW), 430–450 (LVVA…IAPP), 487–507 (IAIA…ISVG), 725–745 (ITIA…LSAL), 780–800 (MGGM…WILV), and 821–841 (FLRA…YPAW).

It belongs to the ABC-4 integral membrane protein family. In terms of assembly, the complex is probably composed of two ATP-binding proteins (Rv0986) and two transmembrane proteins (Rv0987).

It is found in the cell membrane. Probably part of an ABC transporter complex involved in host cell binding either through secretion of an adherence factor or through maintaining the architecture and integrity of the mycobacterial cell envelope. Could be required for host endothelial-cell invasion and/or intracellular survival. This is an uncharacterized protein from Mycobacterium tuberculosis (strain ATCC 25618 / H37Rv).